Here is a 311-residue protein sequence, read N- to C-terminus: N-acetylmuramic acid 6-phosphate etherase (311 aa).

An SIS domain is found at 66–229 (VADRMARGGR…STITMIRLGK (164 aa)). E94 (proton donor) is an active-site residue. E125 is a catalytic residue.

This sequence belongs to the GCKR-like family. MurNAc-6-P etherase subfamily. Homodimer.

The enzyme catalyses N-acetyl-D-muramate 6-phosphate + H2O = N-acetyl-D-glucosamine 6-phosphate + (R)-lactate. Its pathway is amino-sugar metabolism; N-acetylmuramate degradation. In terms of biological role, specifically catalyzes the cleavage of the D-lactyl ether substituent of MurNAc 6-phosphate, producing GlcNAc 6-phosphate and D-lactate. This chain is N-acetylmuramic acid 6-phosphate etherase, found in Streptomyces avermitilis (strain ATCC 31267 / DSM 46492 / JCM 5070 / NBRC 14893 / NCIMB 12804 / NRRL 8165 / MA-4680).